The primary structure comprises 520 residues: UBX domain-containing protein 11 (520 aa).

Positions 1–26 (MSSPLASLSKTRKVPLPSEPMNPGRR) are disordered. Residues 76-149 (MAFMTRKLWD…VREMERFLSD (74 aa)) adopt a coiled-coil conformation. One can recognise an SEP domain in the interval 230–294 (LEPIPLKLYR…VSDLRNQVYL (65 aa)). A UBX domain is found at 392–469 (PAPPLSMLRI…GLVPKAALLL (78 aa)). The disordered stretch occupies residues 476–520 (KSSLKFSPGPCPGPGPGPSPGPGPGPSPGPGPGPSPCPGPSPSPQ). Positions 484-520 (GPCPGPGPGPSPGPGPGPSPGPGPGPSPCPGPSPSPQ) are enriched in pro residues. A run of 3 repeats spans residues 487–494 (PGPGPGPS), 495–502 (PGPGPGPS), and 503–510 (PGPGPGPS). The tract at residues 487–510 (PGPGPGPSPGPGPGPSPGPGPGPS) is 3 X 8 AA tandem repeats of P-G-P-G-P-G-P-S.

Interacts with GNA12, GNA13, RND1, RND2 and RND3.

The protein localises to the cytoplasm. It is found in the cytoskeleton. May be involved in the reorganization of actin cytoskeleton mediated by RND1, RND2 and RND3. Promotes RHOA activation mediated by GNA12 and GNA13. In Homo sapiens (Human), this protein is UBX domain-containing protein 11 (UBXN11).